Reading from the N-terminus, the 383-residue chain is Succinyl-diaminopimelate desuccinylase (383 aa).

Histidine 74 serves as a coordination point for Zn(2+). Residue aspartate 76 is part of the active site. Aspartate 107 lines the Zn(2+) pocket. The active-site Proton acceptor is glutamate 141. Glutamate 142, glutamate 170, and histidine 356 together coordinate Zn(2+).

It belongs to the peptidase M20A family. DapE subfamily. In terms of assembly, homodimer. It depends on Zn(2+) as a cofactor. Requires Co(2+) as cofactor.

It catalyses the reaction N-succinyl-(2S,6S)-2,6-diaminopimelate + H2O = (2S,6S)-2,6-diaminopimelate + succinate. Its pathway is amino-acid biosynthesis; L-lysine biosynthesis via DAP pathway; LL-2,6-diaminopimelate from (S)-tetrahydrodipicolinate (succinylase route): step 3/3. In terms of biological role, catalyzes the hydrolysis of N-succinyl-L,L-diaminopimelic acid (SDAP), forming succinate and LL-2,6-diaminopimelate (DAP), an intermediate involved in the bacterial biosynthesis of lysine and meso-diaminopimelic acid, an essential component of bacterial cell walls. This Cupriavidus taiwanensis (strain DSM 17343 / BCRC 17206 / CCUG 44338 / CIP 107171 / LMG 19424 / R1) (Ralstonia taiwanensis (strain LMG 19424)) protein is Succinyl-diaminopimelate desuccinylase.